Reading from the N-terminus, the 453-residue chain is Bifunctional protein GlmU (453 aa).

The pyrophosphorylase stretch occupies residues M1–K225. UDP-N-acetyl-alpha-D-glucosamine is bound by residues L6–G9, K20, Q71, G76–T77, Y98–D100, G135, E150, N165, and N223. A Mg(2+)-binding site is contributed by D100. N223 contacts Mg(2+). Residues A226–D246 are linker. The tract at residues G247–S453 is N-acetyltransferase. Residues R329 and K347 each contribute to the UDP-N-acetyl-alpha-D-glucosamine site. H359 acts as the Proton acceptor in catalysis. Positions 362 and 373 each coordinate UDP-N-acetyl-alpha-D-glucosamine. Residues A376, N382–Y383, S401, and A419 each bind acetyl-CoA.

It in the N-terminal section; belongs to the N-acetylglucosamine-1-phosphate uridyltransferase family. This sequence in the C-terminal section; belongs to the transferase hexapeptide repeat family. In terms of assembly, homotrimer. Mg(2+) is required as a cofactor.

The protein localises to the cytoplasm. The enzyme catalyses alpha-D-glucosamine 1-phosphate + acetyl-CoA = N-acetyl-alpha-D-glucosamine 1-phosphate + CoA + H(+). It catalyses the reaction N-acetyl-alpha-D-glucosamine 1-phosphate + UTP + H(+) = UDP-N-acetyl-alpha-D-glucosamine + diphosphate. The protein operates within nucleotide-sugar biosynthesis; UDP-N-acetyl-alpha-D-glucosamine biosynthesis; N-acetyl-alpha-D-glucosamine 1-phosphate from alpha-D-glucosamine 6-phosphate (route II): step 2/2. It participates in nucleotide-sugar biosynthesis; UDP-N-acetyl-alpha-D-glucosamine biosynthesis; UDP-N-acetyl-alpha-D-glucosamine from N-acetyl-alpha-D-glucosamine 1-phosphate: step 1/1. It functions in the pathway bacterial outer membrane biogenesis; LPS lipid A biosynthesis. Its function is as follows. Catalyzes the last two sequential reactions in the de novo biosynthetic pathway for UDP-N-acetylglucosamine (UDP-GlcNAc). The C-terminal domain catalyzes the transfer of acetyl group from acetyl coenzyme A to glucosamine-1-phosphate (GlcN-1-P) to produce N-acetylglucosamine-1-phosphate (GlcNAc-1-P), which is converted into UDP-GlcNAc by the transfer of uridine 5-monophosphate (from uridine 5-triphosphate), a reaction catalyzed by the N-terminal domain. The chain is Bifunctional protein GlmU from Burkholderia ambifaria (strain ATCC BAA-244 / DSM 16087 / CCUG 44356 / LMG 19182 / AMMD) (Burkholderia cepacia (strain AMMD)).